The following is an 829-amino-acid chain: MKMTRRAFVKANAAASAAAVAGVTLPASATNLIVSSDQTKIKWDKAPCRFCGTGCSVLVGTQNGRVVATQGDPEAPVNKGLNCIKGYFLSKIMYGKDRVQTPMLRMKDGQYNKDGDFAPVSWDVALDTMAEKWKAALKKHGPTGVGMFGSGQWTVMEGYAAVKLMKAGFRSNNIDPNARHCMASAVGAFMRTFGIDEPMGCYDDFENADSFVLWGSNMAEMHPVLWTRISDRRLSHPHVKVNVLSTYYHRSFELADKGYIFEPQSDLAIANFIANYIIQNNAVNWDFVNKHTNFKQATTDIGYGLRDDDPIQMEAANPNSGAMSSISFEEYKKSVAPYTAQKASEMSGVSEEDLITLAKQYADPKTKVMSLWTMGMNQHTRGVWMNSLVYNIHLLTGKIATPGNSPFSLTGQPSACGTAREVGTFSHRLPADMVVANPKHRAISEKIWKLPEGTLNGKPGAHAVVQDRMLKDGKINAYWVMCNNNMQAGPNINTERLPGYRNPENFIVCSDPYPTATAQAADLILPTAMWVEKEGAYGNAERRTQAWYQQVQAKGEAKSDLWQIMEFSKRFKVEEVWGEELVAKAPEYRGKTMYDILFKNGQVDAFPLSEAQELNDDAKAQGFYVQKGLFEEYASFGRGHGHDLAPYDTYHTVRGLRWPVVDGKETLWRFKEGSDPYAKKGSDWDFYGKPDGKALIISAPYEAPPEVPNDEFDMWLCTGRVLEHWHTGTMTRRVPELYKAVPDALCYIHPADAKKRNLRRGDEVLISNKRGEVRVRVETRGRNRPPEGLVFVPFFDARILINKLILDATDPLSKQTDFKKCPVKITKIA.

The segment at residues 1–29 (MKMTRRAFVKANAAASAAAVAGVTLPASA) is a signal peptide (tat-type signal). Residues 41 to 97 (IKWDKAPCRFCGTGCSVLVGTQNGRVVATQGDPEAPVNKGLNCIKGYFLSKIMYGKD) enclose the 4Fe-4S Mo/W bis-MGD-type domain. [4Fe-4S] cluster is bound by residues Cys48, Cys51, Cys55, and Cys83. Residues Lys85, Gln152, Asn177, Cys181, 214–221 (WGSNMAEM), 245–249 (STYYH), 264–266 (QSD), Met374, Gln378, Asn484, 510–511 (SD), Lys533, Asp560, and 718–727 (TGRVLEHWHT) each bind Mo-bis(molybdopterin guanine dinucleotide). Phe794 lines the substrate pocket. Positions 802 and 819 each coordinate Mo-bis(molybdopterin guanine dinucleotide).

Belongs to the prokaryotic molybdopterin-containing oxidoreductase family. NasA/NapA/NarB subfamily. As to quaternary structure, component of the periplasmic nitrate reductase NapAB complex composed of NapA and NapB. The cofactor is [4Fe-4S] cluster. It depends on Mo-bis(molybdopterin guanine dinucleotide) as a cofactor. Predicted to be exported by the Tat system. The position of the signal peptide cleavage has not been experimentally proven.

The protein resides in the periplasm. The catalysed reaction is 2 Fe(II)-[cytochrome] + nitrate + 2 H(+) = 2 Fe(III)-[cytochrome] + nitrite + H2O. In terms of biological role, catalytic subunit of the periplasmic nitrate reductase complex NapAB. Receives electrons from NapB and catalyzes the reduction of nitrate to nitrite. This chain is Periplasmic nitrate reductase, found in Aliivibrio fischeri (strain MJ11) (Vibrio fischeri).